The following is a 170-amino-acid chain: Lipoprotein signal peptidase (170 aa).

3 consecutive transmembrane segments (helical) span residues 12 to 32 (WYWVVVLVFVADQLSKQWVLA), 67 to 87 (WQRWLFTLVAVGFSTLLTVWL), and 93 to 113 (GLWRLNLAYTLVIGGALGNLI). Active-site residues include D123 and D141. Residues 133 to 153 (HFPAFNIADSAICVGAGLIIL) traverse the membrane as a helical segment.

It belongs to the peptidase A8 family.

Its subcellular location is the cell inner membrane. The catalysed reaction is Release of signal peptides from bacterial membrane prolipoproteins. Hydrolyzes -Xaa-Yaa-Zaa-|-(S,diacylglyceryl)Cys-, in which Xaa is hydrophobic (preferably Leu), and Yaa (Ala or Ser) and Zaa (Gly or Ala) have small, neutral side chains.. Its pathway is protein modification; lipoprotein biosynthesis (signal peptide cleavage). Functionally, this protein specifically catalyzes the removal of signal peptides from prolipoproteins. The polypeptide is Lipoprotein signal peptidase (Shewanella loihica (strain ATCC BAA-1088 / PV-4)).